The primary structure comprises 625 residues: Arginine--tRNA ligase (625 aa).

The 'HIGH' region signature appears at 117–127; sequence ANPIHPLHIGH.

It belongs to the class-I aminoacyl-tRNA synthetase family.

It is found in the cytoplasm. The catalysed reaction is tRNA(Arg) + L-arginine + ATP = L-arginyl-tRNA(Arg) + AMP + diphosphate. The sequence is that of Arginine--tRNA ligase from Saccharolobus solfataricus (strain ATCC 35092 / DSM 1617 / JCM 11322 / P2) (Sulfolobus solfataricus).